Consider the following 229-residue polypeptide: UPF0758 protein Cbei_0490 (229 aa).

Residues 107 to 229 (KITSPKDLAS…FVSLKERGLI (123 aa)) enclose the MPN domain. Residues H178, H180, and D191 each contribute to the Zn(2+) site. The short motif at 178–191 (HNHPSGDPTPSRED) is the JAMM motif element.

This sequence belongs to the UPF0758 family.

This chain is UPF0758 protein Cbei_0490, found in Clostridium beijerinckii (strain ATCC 51743 / NCIMB 8052) (Clostridium acetobutylicum).